Consider the following 184-residue polypeptide: Probable RNA 2'-phosphotransferase (184 aa).

It belongs to the KptA/TPT1 family.

Functionally, removes the 2'-phosphate from RNA via an intermediate in which the phosphate is ADP-ribosylated by NAD followed by a presumed transesterification to release the RNA and generate ADP-ribose 1''-2''-cyclic phosphate (APPR&gt;P). May function as an ADP-ribosylase. The protein is Probable RNA 2'-phosphotransferase of Rhodopirellula baltica (strain DSM 10527 / NCIMB 13988 / SH1).